Reading from the N-terminus, the 223-residue chain is Retbindin (223 aa).

The N-terminal stretch at 1–30 is a signal peptide; it reads MANRGHTQPRALAWALGLTLVWILLGACGG. Intrachain disulfides connect Cys-73–Cys-143, Cys-80–Cys-120, Cys-113–Cys-157, and Cys-126–Cys-139.

It belongs to the folate receptor family. In terms of processing, not N-glycosylated.

It localises to the secreted. The protein resides in the extracellular space. It is found in the extracellular matrix. Its subcellular location is the interphotoreceptor matrix. The protein localises to the cell membrane. Functionally, riboflavin-binding protein which might have a role in retinal flavin transport. The protein is Retbindin (RTBDN) of Canis lupus familiaris (Dog).